A 263-amino-acid chain; its full sequence is Hatching enzyme 1.2 (263 aa).

Residues 1–19 (MDIRASLSILLLLFGLSQA) form the signal peptide. The propeptide at 20 to 64 (SPLREFEAIFVSEPETVDITTQILETNKGSSEVLFEGDVVLPKNR) is activation peptide. The region spanning 65–263 (NALICEDKSC…ILRINKLYGC (199 aa)) is the Peptidase M12A domain. Intrachain disulfides connect Cys69–Cys74, Cys114–Cys263, and Cys135–Cys155. His163 is a Zn(2+) binding site. The active site involves Glu164. Residues His167 and His173 each coordinate Zn(2+).

Zn(2+) serves as cofactor. Expressed in cells of the hatching gland.

It is found in the secreted. The enzyme catalyses Hydrolysis of the inner layer of fish egg envelope. Also hydrolysis of casein and small molecule substrates such as succinyl-Leu-Leu-Val-Tyr-|-7-(4-methyl)coumarylamide.. Metalloendopeptidase which participates in the breakdown of the egg envelope at the time of hatching. Cleaves the N-terminal regions of the zona pellucia glycoproteins ZP2 and ZP3, where it specifically recognizes the peptide sequences TVQQS-|-DYLIK (major site) and KLMLK-|-APEPF (minor site). The polypeptide is Hatching enzyme 1.2 (Danio rerio (Zebrafish)).